A 921-amino-acid polypeptide reads, in one-letter code: Translation initiation factor IF-2 (921 aa).

Disordered stretches follow at residues 81–118 (AVAE…AAAP), 175–194 (PVVE…ANQA), and 219–301 (VAPA…KKHE). The span at 96-112 (PAAPTPPEVPAAAPAPP) shows a compositional bias: pro residues. Residues 229–241 (RPSPAAGAPSRGA) show a composition bias toward low complexity. A compositionally biased stretch (basic and acidic residues) spans 292–301 (KKKEQPKKHE). Residues 421–590 (KRPPVVTIMG…LLQADLMELK (170 aa)) enclose the tr-type G domain. Residues 430 to 437 (GHVDHGKT) are G1. A GTP-binding site is contributed by 430 to 437 (GHVDHGKT). A G2 region spans residues 455-459 (GITQH). The tract at residues 476 to 479 (DTPG) is G3. Residues 476–480 (DTPGH) and 530–533 (NKID) each bind GTP. Positions 530–533 (NKID) are G4. The interval 566-568 (SAK) is G5.

Belongs to the TRAFAC class translation factor GTPase superfamily. Classic translation factor GTPase family. IF-2 subfamily.

The protein resides in the cytoplasm. One of the essential components for the initiation of protein synthesis. Protects formylmethionyl-tRNA from spontaneous hydrolysis and promotes its binding to the 30S ribosomal subunits. Also involved in the hydrolysis of GTP during the formation of the 70S ribosomal complex. This Pelobacter propionicus (strain DSM 2379 / NBRC 103807 / OttBd1) protein is Translation initiation factor IF-2.